The chain runs to 260 residues: MTQAQELSVDFDFRLDGKVALVTGAASGIGAAIASAYATKGARIAAVDLNAEGAEALAAQLGGDRGAHRGFACDVADAASVQAAADAVAAEFGRIDILVNSAGVARLAPAEELSLQDWDSTLAINLSGTFLMCQAVGKRMLEAGGGAIVNMASQAATVALDQHVAYCASKFGVVGVSKVLAAEWGGRGVRVNTISPTVVLTELGHKAWDGPRGDALKKLIPTGRFAYPDEIAAAAVFLASDAAAMINGADLVIDGGYTIK.

Leu21–Asn50 lines the NAD(+) pocket. The active-site Proton acceptor is Tyr166. Position 170 (Lys170) interacts with NAD(+).

This sequence belongs to the short-chain dehydrogenases/reductases (SDR) family.

It carries out the reaction D-threitol + NAD(+) = D-erythrulose + NADH + H(+). It participates in carbohydrate metabolism; D-threitol degradation. Catalyzes the NAD-dependent reversible oxidation of D-threitol. Involved in the degradation pathway of D-threitol, that allows M.smegmatis to grow on this compound as the sole carbon source. Does not catalyze the oxidation of xylitol, L-sorbitol, and L-sorbose. The polypeptide is D-threitol dehydrogenase (Mycolicibacterium smegmatis (strain ATCC 700084 / mc(2)155) (Mycobacterium smegmatis)).